The following is a 251-amino-acid chain: MTEAQRHQILLDMLAQLGFVTVENVIERLGISPATARRDINKLDESGKLKKVRNGAEAITQQRPRWTPMNLHQAQNHDEKVRIAKAASQLVNPGESVVINCGSTAFLLGREMCGKPVQIITNYLPLANYLIDQEHESVIIMGGQYNKSQSITLSPQGSENSLYAGHWMFTSGKGLTADGLYKTDMLTAMAEQKMLSVVGKLVALVDSSKIGERAGMLFSRADQIDMLITGKNANPEVLQQLEAQGVSILRV.

The 56-residue stretch at 3 to 58 folds into the HTH deoR-type domain; sequence EAQRHQILLDMLAQLGFVTVENVIERLGISPATARRDINKLDESGKLKKVRNGAEA. The H-T-H motif DNA-binding region spans 20 to 39; sequence VTVENVIERLGISPATARRD.

Its subcellular location is the cytoplasm. Represses ulaG and the ulaABCDEF operon. This chain is HTH-type transcriptional regulator UlaR, found in Salmonella arizonae (strain ATCC BAA-731 / CDC346-86 / RSK2980).